Consider the following 422-residue polypeptide: Dihydrolipoyllysine-residue succinyltransferase component of 2-oxoglutarate dehydrogenase complex (422 aa).

The Lipoyl-binding domain maps to 1–76 (MPEVKVPELA…EVGQAIAIIG (76 aa)). N6-lipoyllysine is present on Lys42. The disordered stretch occupies residues 77-185 (EGSGNASKEN…SAKEEKKYNQ (109 aa)). Composition is skewed to polar residues over residues 80 to 94 (GNAS…TPQQ) and 116 to 130 (NQAN…NATP). A Peripheral subunit-binding (PSBD) domain is found at 127-163 (NATPSARRYARENGVNLAEVSPKTNDVVRKEDIDKKQ). Over residues 152–163 (DVVRKEDIDKKQ) the composition is skewed to basic and acidic residues. The span at 164–176 (QAPASTQTTQQAS) shows a compositional bias: low complexity. Residues His393 and Asp397 contribute to the active site.

Belongs to the 2-oxoacid dehydrogenase family. In terms of assembly, forms a 24-polypeptide structural core with octahedral symmetry. Part of the 2-oxoglutarate dehydrogenase (OGDH) complex composed of E1 (2-oxoglutarate dehydrogenase), E2 (dihydrolipoamide succinyltransferase) and E3 (dihydrolipoamide dehydrogenase); the complex contains multiple copies of the three enzymatic components (E1, E2 and E3). It depends on (R)-lipoate as a cofactor.

The enzyme catalyses N(6)-[(R)-dihydrolipoyl]-L-lysyl-[protein] + succinyl-CoA = N(6)-[(R)-S(8)-succinyldihydrolipoyl]-L-lysyl-[protein] + CoA. The protein operates within amino-acid degradation; L-lysine degradation via saccharopine pathway; glutaryl-CoA from L-lysine: step 6/6. Functionally, E2 component of the 2-oxoglutarate dehydrogenase (OGDH) complex which catalyzes the second step in the conversion of 2-oxoglutarate to succinyl-CoA and CO(2). In Staphylococcus aureus (strain USA300), this protein is Dihydrolipoyllysine-residue succinyltransferase component of 2-oxoglutarate dehydrogenase complex (odhB).